The chain runs to 352 residues: Leukotriene B4 receptor 1 (352 aa).

Residues methionine 1–leucine 19 lie on the Extracellular side of the membrane. The N-linked (GlcNAc...) asparagine glycan is linked to asparagine 2. A helical membrane pass occupies residues leucine 20–serine 42. At isoleucine 43–alanine 54 the chain is on the cytoplasmic side. Residues leucine 55–leucine 75 form a helical membrane-spanning segment. The Extracellular segment spans residues histidine 76–arginine 91. The helical transmembrane segment at leucine 92 to leucine 113 threads the bilayer. The Cytoplasmic segment spans residues aspartate 114–leucine 138. A helical transmembrane segment spans residues alanine 139–valine 159. At proline 160–arginine 178 the chain is on the extracellular side. The N-linked (GlcNAc...) asparagine glycan is linked to asparagine 164. The helical transmembrane segment at alanine 179 to alanine 199 threads the bilayer. The Cytoplasmic segment spans residues serine 200–arginine 221. A helical transmembrane segment spans residues leucine 222–leucine 242. At alanine 243–asparagine 268 the chain is on the extracellular side. The helical transmembrane segment at valine 269–glycine 289 threads the bilayer. At glycine 290 to asparagine 352 the chain is on the cytoplasmic side. Polar residues-rich tracts occupy residues serine 310–arginine 326 and glutamate 338–asparagine 352. A disordered region spans residues serine 310–asparagine 352.

This sequence belongs to the G-protein coupled receptor 1 family. Phosphorylated by GRK6 upon leukotriene B4 binding; which promotes desensitization. Expressed at highest levels in heart, skeletal muscle and at lower levels in brain and liver. High level of expression in lymphoid tissues.

The protein localises to the cell membrane. In terms of biological role, receptor for extracellular ATP &gt; UTP and ADP. The activity of this receptor is mediated by G proteins which activate a phosphatidylinositol-calcium second messenger system. May be the cardiac P2Y receptor involved in the regulation of cardiac muscle contraction through modulation of L-type calcium currents. Is a receptor for leukotriene B4, a potent chemoattractant involved in inflammation and immune response. The chain is Leukotriene B4 receptor 1 (LTB4R) from Homo sapiens (Human).